We begin with the raw amino-acid sequence, 230 residues long: Flagellar L-ring protein (230 aa).

Positions 1 to 22 (MSPLSNFARTALACAVAALLGG) are cleaved as a signal peptide. C23 carries the N-palmitoyl cysteine lipid modification. The S-diacylglycerol cysteine moiety is linked to residue C23.

Belongs to the FlgH family. The basal body constitutes a major portion of the flagellar organelle and consists of four rings (L,P,S, and M) mounted on a central rod.

The protein resides in the cell outer membrane. It is found in the bacterial flagellum basal body. Assembles around the rod to form the L-ring and probably protects the motor/basal body from shearing forces during rotation. The protein is Flagellar L-ring protein of Stenotrophomonas maltophilia (strain R551-3).